The chain runs to 92 residues: MKFNAVVRTDLGKGASRRLRLTEKFPAIIYGGEAAPVAIELLHSDVINQMDKPEFYEGIILVIDGQEVAVKPQDIQRHVFKPKVEHMDFKRV.

The protein belongs to the bacterial ribosomal protein bL25 family. In terms of assembly, part of the 50S ribosomal subunit; part of the 5S rRNA/L5/L18/L25 subcomplex. Contacts the 5S rRNA. Binds to the 5S rRNA independently of L5 and L18.

In terms of biological role, this is one of the proteins that binds to the 5S RNA in the ribosome where it forms part of the central protuberance. The sequence is that of Large ribosomal subunit protein bL25 from Photobacterium profundum (strain SS9).